Consider the following 204-residue polypeptide: N-alpha-acetyltransferase 40 (204 aa).

The N-acetyltransferase domain maps to 39-202; that stretch reads EIYHHLEKGL…YYILYTKSRK (164 aa). Substrate is bound by residues Tyr64, 107 to 109, and Tyr118; that span reads TVE. Acetyl-CoA-binding positions include 120–122 and 128–133; these read IQL and GRNVGK. A substrate-binding site is contributed by Thr154. Position 159 (Asn159) interacts with acetyl-CoA. Residue Ser176 participates in substrate binding.

This sequence belongs to the acetyltransferase family. NAA40 subfamily.

The protein resides in the cytoplasm. It localises to the nucleus. The enzyme catalyses N-terminal L-seryl-[histone H4] + acetyl-CoA = N-terminal N(alpha)-acetyl-L-seryl-[histone H4] + CoA + H(+). It catalyses the reaction N-terminal L-seryl-[histone H2A] + acetyl-CoA = N-terminal N(alpha)-acetyl-L-seryl-[histone H2A] + CoA + H(+). In terms of biological role, N-alpha-acetyltransferase that specifically mediates the acetylation of the N-terminal residues of histones H4 and H2A. In Schizosaccharomyces pombe (strain 972 / ATCC 24843) (Fission yeast), this protein is N-alpha-acetyltransferase 40.